A 435-amino-acid polypeptide reads, in one-letter code: 3-phosphoshikimate 1-carboxyvinyltransferase (435 aa).

The 3-phosphoshikimate site is built by Lys-21, Ser-22, and Arg-26. Residue Lys-21 participates in phosphoenolpyruvate binding. Phosphoenolpyruvate contacts are provided by Gly-98 and Arg-126. 6 residues coordinate 3-phosphoshikimate: Ser-169, Ser-170, Gln-171, Ser-197, Asp-312, and Lys-339. Gln-171 is a binding site for phosphoenolpyruvate. Catalysis depends on Asp-312, which acts as the Proton acceptor. Residues Arg-343, Arg-386, and Lys-412 each contribute to the phosphoenolpyruvate site.

The protein belongs to the EPSP synthase family. Monomer.

It is found in the cytoplasm. It catalyses the reaction 3-phosphoshikimate + phosphoenolpyruvate = 5-O-(1-carboxyvinyl)-3-phosphoshikimate + phosphate. The protein operates within metabolic intermediate biosynthesis; chorismate biosynthesis; chorismate from D-erythrose 4-phosphate and phosphoenolpyruvate: step 6/7. Functionally, catalyzes the transfer of the enolpyruvyl moiety of phosphoenolpyruvate (PEP) to the 5-hydroxyl of shikimate-3-phosphate (S3P) to produce enolpyruvyl shikimate-3-phosphate and inorganic phosphate. This chain is 3-phosphoshikimate 1-carboxyvinyltransferase, found in Clostridium beijerinckii (strain ATCC 51743 / NCIMB 8052) (Clostridium acetobutylicum).